The sequence spans 515 residues: Interferon-induced, double-stranded RNA-activated protein kinase (515 aa).

Alanine 2 is subject to N-acetylalanine. Positions 8–76 (FYMDKLNKYR…AKLAVDILDN (69 aa)) constitute a DRBM 1 domain. Residue lysine 68 forms a Glycyl lysine isopeptide (Lys-Gly) (interchain with G-Cter in ISG15) linkage. Threonine 84 carries the phosphothreonine modification. Residues 95 to 162 (NYIGLVNSFA…AKEAYQKLLK (68 aa)) enclose the DRBM 2 domain. Tyrosine 96 is subject to Phosphotyrosine; by autocatalysis. A Glycyl lysine isopeptide (Lys-Gly) (interchain with G-Cter in ISG15) cross-link involves residue lysine 154. The residue at position 157 (tyrosine 157) is a Phosphotyrosine; by autocatalysis. The segment at 204-224 (ENVFTNGLGENKRKSGVKVSP) is disordered. Threonine 233 is modified (phosphothreonine). Positions 241–515 (DFEDIEEIGL…ISEKKKRNTC (275 aa)) are interaction with TRAF5. The Protein kinase domain occupies 242–504 (FEDIEEIGLG…EILKTLAEWR (263 aa)). 248-256 (IGLGGFGQV) contacts ATP. Tyrosine 268 is subject to Phosphotyrosine; by autocatalysis. Lysine 271 serves as a coordination point for ATP. The Proton acceptor role is filled by aspartate 376. Phosphothreonine; by autocatalysis is present on residues threonine 409 and threonine 414. Serine 419 is modified (phosphoserine).

This sequence belongs to the protein kinase superfamily. Ser/Thr protein kinase family. GCN2 subfamily. In terms of assembly, homodimer. Interacts with DNAJC3 and STRBP. Forms a complex with FANCA, FANCC, FANCG and HSP70. Interacts with ADAR/ADAR1. The inactive form interacts with NCK1. Interacts (via the kinase catalytic domain) with STAT3 (via SH2 domain), TRAF2 (C-terminus), TRAF5 (C-terminus) and TRAF6 (C-terminus). Interacts with MAP2K6, TARBP2, NLRP1, NLRC4 and AIM2. Interacts (via DRBM 1 domain) with DUS2L (via DRBM domain). Interacts with DHX9 (via N-terminus) and this interaction is dependent upon activation of the kinase. The inactive form interacts with GSN. Interacts with IKBKB/IKKB, NPM1, NLRP3 and IRS1. In terms of processing, autophosphorylated on several Ser, Thr and Tyr residues. Autophosphorylation of Thr-414 is dependent on Thr-409 and is stimulated by dsRNA binding and dimerization. Autophosphorylation apparently leads to the activation of the kinase. Tyrosine autophosphorylation is essential for efficient dsRNA-binding, dimerization, and kinase activation. Expressed in heart, lung, brain, kidney, testes, thymus and bone marrow.

It localises to the cytoplasm. The protein localises to the nucleus. Its subcellular location is the perinuclear region. The enzyme catalyses L-seryl-[protein] + ATP = O-phospho-L-seryl-[protein] + ADP + H(+). It carries out the reaction L-threonyl-[protein] + ATP = O-phospho-L-threonyl-[protein] + ADP + H(+). The catalysed reaction is L-tyrosyl-[protein] + ATP = O-phospho-L-tyrosyl-[protein] + ADP + H(+). Initially produced in an inactive form and is activated by binding to viral dsRNA, which causes dimerization and autophosphorylation in the activation loop and stimulation of function. ISGylation can activate it in the absence of viral infection. Can also be activated by heparin, pro-inflammatory stimuli, growth factors, cytokines, oxidative stress and the cellular protein PRKRA. Activity is markedly stimulated by manganese ions. Activation is blocked by the cellular proteins TARBP2, DUS2L, NPM1, NCK1 and ADAR. Its function is as follows. IFN-induced dsRNA-dependent serine/threonine-protein kinase that phosphorylates the alpha subunit of eukaryotic translation initiation factor 2 (EIF2S1/eIF-2-alpha) and plays a key role in the innate immune response to viral infection. Inhibits viral replication via the integrated stress response (ISR): EIF2S1/eIF-2-alpha phosphorylation in response to viral infection converts EIF2S1/eIF-2-alpha in a global protein synthesis inhibitor, resulting to a shutdown of cellular and viral protein synthesis, while concomitantly initiating the preferential translation of ISR-specific mRNAs, such as the transcriptional activator ATF4. Exerts its antiviral activity on a wide range of DNA and RNA viruses including west nile virus (WNV), sindbis virus (SV), foot-and-mouth virus (FMDV), semliki Forest virus (SFV) and lymphocytic choriomeningitis virus (LCMV). Also involved in the regulation of signal transduction, apoptosis, cell proliferation and differentiation: phosphorylates other substrates including p53/TP53, PPP2R5A, DHX9, ILF3, and IRS1. In addition to serine/threonine-protein kinase activity, also has tyrosine-protein kinase activity and phosphorylates CDK1 at 'Tyr-4' upon DNA damage, facilitating its ubiquitination and proteasomal degradation. Either as an adapter protein and/or via its kinase activity, can regulate various signaling pathways (p38 MAP kinase, NF-kappa-B and insulin signaling pathways) and transcription factors (JUN, STAT1, STAT3, IRF1, ATF3) involved in the expression of genes encoding pro-inflammatory cytokines and IFNs. Activates the NF-kappa-B pathway via interaction with IKBKB and TRAF family of proteins and activates the p38 MAP kinase pathway via interaction with MAP2K6. Can act as both a positive and negative regulator of the insulin signaling pathway (ISP). Negatively regulates ISP by inducing the inhibitory phosphorylation of insulin receptor substrate 1 (IRS1) at 'Ser-312' and positively regulates ISP via phosphorylation of PPP2R5A which activates FOXO1, which in turn up-regulates the expression of insulin receptor substrate 2 (IRS2). Can regulate NLRP3 inflammasome assembly and the activation of NLRP3, NLRP1, AIM2 and NLRC4 inflammasomes. Plays a role in the regulation of the cytoskeleton by binding to gelsolin (GSN), sequestering the protein in an inactive conformation away from actin. In Mus musculus (Mouse), this protein is Interferon-induced, double-stranded RNA-activated protein kinase (Eif2ak2).